The following is a 156-amino-acid chain: Aspartate carbamoyltransferase regulatory chain (156 aa).

Residues cysteine 109, cysteine 114, cysteine 140, and cysteine 143 each contribute to the Zn(2+) site.

Belongs to the PyrI family. Contains catalytic and regulatory chains. Zn(2+) is required as a cofactor.

Involved in allosteric regulation of aspartate carbamoyltransferase. This chain is Aspartate carbamoyltransferase regulatory chain, found in Methanosarcina barkeri (strain Fusaro / DSM 804).